We begin with the raw amino-acid sequence, 238 residues long: Ribonuclease PH (238 aa).

Residues Arg-86 and 124 to 126 contribute to the phosphate site; that span reads GTR.

This sequence belongs to the RNase PH family. Homohexameric ring arranged as a trimer of dimers.

It catalyses the reaction tRNA(n+1) + phosphate = tRNA(n) + a ribonucleoside 5'-diphosphate. Phosphorolytic 3'-5' exoribonuclease that plays an important role in tRNA 3'-end maturation. Removes nucleotide residues following the 3'-CCA terminus of tRNAs; can also add nucleotides to the ends of RNA molecules by using nucleoside diphosphates as substrates, but this may not be physiologically important. Probably plays a role in initiation of 16S rRNA degradation (leading to ribosome degradation) during starvation. In Yersinia enterocolitica serotype O:8 / biotype 1B (strain NCTC 13174 / 8081), this protein is Ribonuclease PH.